We begin with the raw amino-acid sequence, 61 residues long: Small ribosomal subunit protein eS30A (61 aa).

The tract at residues 1 to 36 (MGKVHGSLARAGKVKSQTPKVEKQEKPKQPKGRAYK) is disordered.

It belongs to the eukaryotic ribosomal protein eS30 family. Component of the small ribosomal subunit (SSU). Mature yeast ribosomes consist of a small (40S) and a large (60S) subunit. The 40S small subunit contains 1 molecule of ribosomal RNA (18S rRNA) and at least 33 different proteins. The large 60S subunit contains 3 rRNA molecules (25S, 5.8S and 5S rRNA) and at least 46 different proteins.

It is found in the cytoplasm. Its subcellular location is the nucleus. Component of the ribosome, a large ribonucleoprotein complex responsible for the synthesis of proteins in the cell. The small ribosomal subunit (SSU) binds messenger RNAs (mRNAs) and translates the encoded message by selecting cognate aminoacyl-transfer RNA (tRNA) molecules. The large subunit (LSU) contains the ribosomal catalytic site termed the peptidyl transferase center (PTC), which catalyzes the formation of peptide bonds, thereby polymerizing the amino acids delivered by tRNAs into a polypeptide chain. The nascent polypeptides leave the ribosome through a tunnel in the LSU and interact with protein factors that function in enzymatic processing, targeting, and the membrane insertion of nascent chains at the exit of the ribosomal tunnel. This is Small ribosomal subunit protein eS30A (rps3001) from Schizosaccharomyces pombe (strain 972 / ATCC 24843) (Fission yeast).